The following is a 1605-amino-acid chain: GTPase-activating protein pac-1 (1605 aa).

Residues 1 to 574 (MEEHHRRLHV…QRFIALFNSS (574 aa)) are required for localization to adherens junctions. Disordered regions lie at residues 293–430 (QRHP…ISTS), 529–556 (MRSG…LNAP), and 574–593 (SKTS…RSRT). Residues 323–334 (SKEDPSEDTGHD) are compositionally biased toward basic and acidic residues. Low complexity-rich tracts occupy residues 353–365 (RNAS…SSRS), 420–430 (TTSSTSSISTS), and 530–552 (RSGG…TSRS). Residues 599 to 726 (RFALPGTILQ…WISVLQSSSE (128 aa)) enclose the PH domain. Polar residues-rich tracts occupy residues 728 to 745 (GIAT…TTGR) and 846 to 855 (KNSQLQSPTA). Disordered stretches follow at residues 728–752 (GIAT…NAVS) and 846–942 (KNSQ…AGAP). Positions 868–879 (SSSQTMATTSSS) are enriched in low complexity. The segment covering 908–917 (SGRKWKKSKA) has biased composition (basic residues). A compositionally biased stretch (low complexity) spans 928–941 (GSSSGSQQQGAAGA). In terms of domain architecture, Rho-GAP spans 948 to 1146 (VRIADCPTGS…TLIHYNLWMF (199 aa)). Disordered stretches follow at residues 1152 to 1176 (TEDA…YGVG), 1207 to 1258 (EGKG…AASV), 1277 to 1339 (SRQT…RRKR), 1438 to 1533 (TSDY…ARRH), and 1554 to 1605 (GIRK…DELL). Residues 1211 to 1229 (QKIKNMLRRNSRRDKSKSK) are compositionally biased toward basic residues. Polar residues-rich tracts occupy residues 1244–1257 (GWTQ…SAAS) and 1278–1300 (RQTV…RLDQ). Low complexity predominate over residues 1301-1312 (SPSLESSLGSLP). A compositionally biased stretch (polar residues) spans 1438-1453 (TSDYSTTSSAPLSTNP). Residues 1461-1476 (DQPNSSSDYASSDPSP) are compositionally biased toward low complexity. Composition is skewed to polar residues over residues 1480–1493 (NPST…SNLA) and 1500–1515 (HATS…MSRS). Basic and acidic residues predominate over residues 1558–1575 (SSPDVSRDEVSDDEKNHQ).

Associated with the catenin-cadherin complex consisting of hmr-1, hmp-1 and hmp-2; this is mediated by interaction with picc-1.

It is found in the cytoplasm. Its subcellular location is the cell junction. The protein resides in the adherens junction. GTPase-activating protein for members of the Rho subfamily including Rac1, RhoA and cdc42 and other Ras-related subfamilies including let-60. Mediates radial (inner-outer) polarity and gastrulation by excluding par-6 from contacted cell surfaces; acts by inactivating cdc42 at inner cell surfaces which limits active cdc42 to outer cell surfaces devoid of cell-cell contacts, where cdc42 can bind and recruit par-6. Required for blastomere polarization. The sequence is that of GTPase-activating protein pac-1 (pac-1) from Caenorhabditis elegans.